The primary structure comprises 647 residues: Protein cueball (647 aa).

The N-terminal stretch at 1 to 22 is a signal peptide; that stretch reads MLWCPSVLVPLIAVAACLPVLA. The Extracellular portion of the chain corresponds to 23–534; the sequence is IGTPLEWEFA…CMTPSPWTSN (512 aa). N-linked (GlcNAc...) asparagine glycans are attached at residues asparagine 80 and asparagine 106. LDL-receptor class B repeat units lie at residues 119–166, 167–211, and 212–257; these read RNLF…DVCR, RKLY…DQLS, and DRIF…TNDA. Asparagine 175 is a glycosylation site (N-linked (GlcNAc...) asparagine). The N-linked (GlcNAc...) asparagine glycan is linked to asparagine 316. EGF-like domains are found at residues 365-401 and 436-473; these read DEKT…SRCE and EISK…ERCE. Intrachain disulfides connect cysteine 376-cysteine 389, cysteine 391-cysteine 400, cysteine 440-cysteine 450, cysteine 444-cysteine 461, and cysteine 463-cysteine 472. Asparagine 475 carries N-linked (GlcNAc...) asparagine glycosylation. Residues 535–555 form a helical membrane-spanning segment; that stretch reads VIIVLVLGIVSCFFLVAVIVH. Topologically, residues 556–647 are cytoplasmic; it reads GFRRLYKPKR…LIHNMDDDLY (92 aa).

The protein belongs to the cueball family.

Its subcellular location is the cell membrane. Functionally, has a role in spermatogenesis and oogenesis. The protein is Protein cueball of Drosophila persimilis (Fruit fly).